A 534-amino-acid polypeptide reads, in one-letter code: Serine/threonine-protein kinase ppk15 (534 aa).

The disordered stretch occupies residues 1–40; it reads MDSDSPILPLSNNPPAARTHDHSQRNNHARHVSSSGTTLF. 3 positions are modified to phosphoserine: Ser-33, Ser-56, and Ser-60. The interval 85–104 is disordered; sequence FSSEQNPRRPLTKPSEGVHN. The Protein kinase domain occupies 130–458; sequence YLILDTLGHG…PDQAKNHPFI (329 aa). ATP is bound by residues 136–144 and Lys-159; that span reads LGHGTFGQV. Asp-257 functions as the Proton acceptor in the catalytic mechanism. Tyr-291 is modified (phosphotyrosine).

This sequence belongs to the protein kinase superfamily. Ser/Thr protein kinase family.

Its subcellular location is the cytoplasm. The protein localises to the cytoskeleton. It localises to the microtubule organizing center. The protein resides in the spindle pole body. The catalysed reaction is L-seryl-[protein] + ATP = O-phospho-L-seryl-[protein] + ADP + H(+). The enzyme catalyses L-threonyl-[protein] + ATP = O-phospho-L-threonyl-[protein] + ADP + H(+). This Schizosaccharomyces pombe (strain 972 / ATCC 24843) (Fission yeast) protein is Serine/threonine-protein kinase ppk15 (ppk15).